We begin with the raw amino-acid sequence, 1894 residues long: MASEEKTEELHPFTDIFNEDETDRNCLLSKPTCFIIFGKPGAGKTTLARNIAQAWKCIRVEALSVLEEHIAAEKETGAMLQSLLVSGHSIPDELVTKLILEKIKSPEVAHFGYILTEMPSLAQDNMTSLKQIELVKNLELQPDIIINIKCSDYDLCQRTCGQRQHSTTGYVYTREQWDPEIIESRRRKKRDFPKEGKSEEEEEEEEQEEEEAFIAEMQMVAEILQHLVQRPEDYLENVEITVKLYKELLLSALEEVMAEHNPQYLIELDGNKSPEELFMTVIERLKYLNVRRAAVITKLQGTEEEMTDIIDTEELFRTVSSYKLIAPRYRWYRSKWARSCPVSLKDGNIYSGAADYTVSFLGKMYCLSSEETLKLFSLNPRPFLLPPMPLPPCKVFIFGPEHIGKTTLANLIAEHFKAKVIDYAKLVQPRFDSAREKLIKDTITEATNTAIKVVQQRLLNEKQAKQQEERTLKELQVQYSKREYNDFLSKSSEELPSLENTGSKLSSLEIGQEDKSKSETTITGDQVKDVSTEESIEEVTENHPEVFAILEDTLRHAKELNFEQPHDKQAEILEEVIKETEDNKNRFPGAPKHGGWIVENFPLVRELWLSLIEKALLPDLVVYLSDAESNGKHVLNRLYLKNKAEIDGKILERLQEEAQAKKREEEEIRKVKEEELRLEEEKQRLMELATKKSKGRHRLTTLVAHHLALPYPDYPDNEAEEEVEDSEIHEESEAQEIPEYTRGSSLPEASETSETPEGDHEPEAEFKPPGDTAVEAETEKDPKEGLGSEDLLKVMLPEFPEDGYPNVPEMEPLKEVLNNHILSWKQLEQTIMDNVVSTLTVDVSNKTPQELLQRVVETMERPFKYSAWELNAEDYEEEAEDYQAETEIDEEQEEEEEEEEEGEEKIKEKRRHMGDTKHFCPVVLKENFVLQPGNPDEAVKYREKIYYFSSTEAKEKFLEHPEDYVSQNEPLKAPPLRICLLGPHGSGKTVCARKLAENFGIFHIQFDEFLQEKMLLKAERKFGPEFEDDSEEEQLVKQELEELAAQANVKIEEDTTKKQLPDVQLTEEEEAIKLSLTDNEPLPSEILDSILSEWWLKEPIRSTGFILDGFPRHPEEAQFLGERGFFPDAAVIIQVDDQDIFDRLLPAQVQKWKTKQHKKLERKKLIKDLKTKIKEDMVAKRRAELILEREKKRREDGTFRDEDEFSDEDADYEDDIENILEEEFPKDEEEMSEEDEEQEADATERLRNELGEKFETETNNIQSIQDEFDKVLIPIIMVNGARKMHIVQYVMNMKLKPLVENRESIFEKCYPVSSHLAHKMLSYTYKHMSSFGYWDPVKLSEGETIKPVENAENPLNPVIHRHYIYFLSNKQTKEKFMMNPIKYIRQPKPKATMPVRIMIVGPPKSGKTTVAKKLASDYGLRCLSVGDALRGMLNNHPDSELSLMLNWHLHKGKTVPDELAIQALDISLMESVCNTIGVVIDGYPVTPHQMDLLEARSIIPMVIFELHVPSKEIFKRLLLEKKTEQSMSYPLHNSSQIIAYKNAKYHKNINEIRQFYQKQHQNWHVIDGFHSKWWVWNEVLKDIQQMNKYIQTYMKKIKEGKAACIDKLCITPEELIARLGEFKQFCPVSLAESNELIDCSVTSSLEFAAEFRGHYYKMSSQEKLNKFLKDPELYVPPLAPHPLPPDDLLPKRLTLSELKSRFPKCAELQGYCPVTYQDGKQRYEALVPGNIRYALEYRNCIYICESEEKLQKFMRSPMQYWNQKLPRKLPPLKESIHLTSLPLPGYLEQGTATSLIKAMNAAGNLKPKLPFLSVRRSVLLYIAFHLKAFNPKGSEYSRKKYKKKLEQFVERCELITYLSSKMTRKYKEPQFRAIDFDHKLQTFLSLKNIDPVTG.

Positions 32-286 (TCFIIFGKPG…LFMTVIERLK (255 aa)) are adenylate kinase 1. 41 to 46 (GAGKTT) is an ATP binding site. The NMP 1 stretch occupies residues 61–90 (EALSVLEEHIAAEKETGAMLQSLLVSGHSI). 117 to 120 (EMPS) is a binding site for AMP. The segment at 161 to 206 (GQRQHSTTGYVYTREQWDPEIIESRRRKKRDFPKEGKSEEEEEEEE) is LID 1. Residues 188–211 (KKRDFPKEGKSEEEEEEEEQEEEE) are disordered. Acidic residues predominate over residues 198–211 (SEEEEEEEEQEEEE). R230 serves as a coordination point for AMP. Residues 451-478 (IKVVQQRLLNEKQAKQQEERTLKELQVQ) adopt a coiled-coil conformation. A disordered region spans residues 492 to 533 (SEELPSLENTGSKLSSLEIGQEDKSKSETTITGDQVKDVSTE). A coiled-coil region spans residues 651-691 (LERLQEEAQAKKREEEEIRKVKEEELRLEEEKQRLMELATK). 2 disordered regions span residues 710–789 (PYPD…LGSE) and 876–911 (EEEA…EKRR). The span at 715 to 736 (PDNEAEEEVEDSEIHEESEAQE) shows a compositional bias: acidic residues. Composition is skewed to basic and acidic residues over residues 757 to 768 (EGDHEPEAEFKP) and 777 to 789 (ETEK…LGSE). Positions 876-903 (EEEAEDYQAETEIDEEQEEEEEEEEEGE) are enriched in acidic residues. The interval 976–1187 (LRICLLGPHG…VAKRRAELIL (212 aa)) is adenylate kinase 2. 985–990 (GSGKTV) contributes to the ATP binding site. The NMP 2 stretch occupies residues 1005–1036 (QFDEFLQEKMLLKAERKFGPEFEDDSEEEQLV). Residues 1034-1036 (QLV) and 1063-1066 (VQLT) contribute to the AMP site. Positions 1108-1128 (DGFPRHPEEAQFLGERGFFPD) are LID 2. Residues 1223-1241 (EFPKDEEEMSEEDEEQEAD) are compositionally biased toward acidic residues. The interval 1223–1243 (EFPKDEEEMSEEDEEQEADAT) is disordered. Residues 1395–1584 (VRIMIVGPPK…VWNEVLKDIQ (190 aa)) form an adenylate kinase 3 region. ATP is bound at residue 1404-1409 (KSGKTT). The interval 1424–1455 (SVGDALRGMLNNHPDSELSLMLNWHLHKGKTV) is NMP 3. Residues R1430, 1482–1485 (GYPV), and Q1489 contribute to the AMP site. An LID 3 region spans residues 1519–1533 (LEKKTEQSMSYPLHN).

It belongs to the adenylate kinase family. Highly expressed in the testis.

The protein localises to the cytoplasm. It is found in the nucleus. Its subcellular location is the cell projection. It localises to the cilium. The protein resides in the flagellum. It carries out the reaction a ribonucleoside 5'-phosphate + ATP = a ribonucleoside 5'-diphosphate + ADP. The catalysed reaction is AMP + ATP = 2 ADP. It catalyses the reaction GTP + AMP = GDP + ADP. The enzyme catalyses CMP + ATP = CDP + ADP. It carries out the reaction GTP + CMP = CDP + GDP. The catalysed reaction is dAMP + ATP = dADP + ADP. It catalyses the reaction dCMP + ATP = dCDP + ADP. The enzyme catalyses a ribonucleoside 5'-diphosphate + ATP = a ribonucleoside 5'-triphosphate + ADP. It carries out the reaction CDP + ATP = CTP + ADP. The catalysed reaction is CDP + GTP = CTP + GDP. It catalyses the reaction GDP + ATP = GTP + ADP. The enzyme catalyses UDP + ATP = UTP + ADP. It carries out the reaction GTP + UDP = UTP + GDP. The catalysed reaction is dTDP + GTP = dTTP + GDP. It catalyses the reaction dCDP + ATP = dCTP + ADP. The enzyme catalyses dCDP + GTP = dCTP + GDP. It carries out the reaction dGDP + ATP = dGTP + ADP. The catalysed reaction is dTDP + ATP = dTTP + ADP. It catalyses the reaction dADP + GTP = dATP + GDP. Its function is as follows. Broad-specificity nucleoside phosphate kinase involved in cellular nucleotide homeostasis by catalyzing nucleoside-phosphate interconversions. Similar to other adenylate kinases, preferentially catalyzes the phosphorylation of the nucleoside monophosphate AMP with ATP as phosphate donor to produce ADP. In vitro, can also catalyze the phosphorylation of CMP, dAMP and dCMP and use GTP as an alternate phosphate donor. Moreover, exhibits a diphosphate kinase activity, producing ATP, CTP, GTP, UTP, TTP, dATP, dCTP and dGTP from the corresponding diphosphate substrates with either ATP or GTP as phosphate donors. For this activity shows the following substrate preference CDP &gt; UDP &gt; ADP &gt; TDP. The protein is Adenylate kinase 9 of Mus musculus (Mouse).